We begin with the raw amino-acid sequence, 160 residues long: uncharacterized protein (160 aa).

The N-acetyltransferase domain maps to 9–151; that stretch reads LLINYKTLEK…GENPLIWLPE (143 aa).

This is an uncharacterized protein from Oceanobacillus iheyensis (strain DSM 14371 / CIP 107618 / JCM 11309 / KCTC 3954 / HTE831).